We begin with the raw amino-acid sequence, 290 residues long: Ribonuclease HIII (290 aa).

An RNase H type-2 domain is found at 78–290 (LPLIGTDEVG…FKNTEKAKNA (213 aa)). The a divalent metal cation site is built by Asp84, Glu85, and Asp187.

Belongs to the RNase HII family. RnhC subfamily. Requires Mn(2+) as cofactor. Mg(2+) is required as a cofactor.

The protein localises to the cytoplasm. The catalysed reaction is Endonucleolytic cleavage to 5'-phosphomonoester.. Its function is as follows. Endonuclease that specifically degrades the RNA of RNA-DNA hybrids. The protein is Ribonuclease HIII of Streptococcus pneumoniae (strain P1031).